A 490-amino-acid chain; its full sequence is MTATIDNTQSQATTGGVGRVARVIGPVVDVEFAADELPEIYNALTVDVDFATASEQVEGETKRTLTLEVAQHIGDNMVRAISLQPTDGLVRGALVRDTGAPISVPVGDVTKGHVFNVLGQTLDVPRIEVTERWPIHRPAPAFDQLEAKTEMLETGIKVIDLLTPYVRGGKIGLFGGAGVGKTVLIQEMIHRVAKNFGGVSVFAGVGERTREGNDLFLEMTESGVINDTVLVFGQMDEPPGCRLRVGLAALTMAEYFRDVKRQDVLLFIDNIFRFVQAGSEVSTLLGRMPSAVGYQPTLADEMGALQERITSTRGHSITSVQAIYVPADDITDPAPHTTFTHLDATTVLSRPISEKGIYPAVDPLDSTSRILDPQFIGEEHFRVANQVKQILQRYKDLQDIIAILGIDELSEEDKVIVGRARRIERFLSQNMFVAEAFTGQPGSFVPLDETIDAFRRLCEGELDHLPEQAFFMCGGLDDVQAKAKRLAERS.

Residue 175 to 182 (GGAGVGKT) participates in ATP binding.

Belongs to the ATPase alpha/beta chains family. In terms of assembly, F-type ATPases have 2 components, CF(1) - the catalytic core - and CF(0) - the membrane proton channel. CF(1) has five subunits: alpha(3), beta(3), gamma(1), delta(1), epsilon(1). CF(0) has three main subunits: a(1), b(2) and c(9-12). The alpha and beta chains form an alternating ring which encloses part of the gamma chain. CF(1) is attached to CF(0) by a central stalk formed by the gamma and epsilon chains, while a peripheral stalk is formed by the delta and b chains.

The protein resides in the cell membrane. The catalysed reaction is ATP + H2O + 4 H(+)(in) = ADP + phosphate + 5 H(+)(out). Produces ATP from ADP in the presence of a proton gradient across the membrane. The catalytic sites are hosted primarily by the beta subunits. The protein is ATP synthase subunit beta of Acidothermus cellulolyticus (strain ATCC 43068 / DSM 8971 / 11B).